Here is a 39-residue protein sequence, read N- to C-terminus: Mating pheromone Er-11 (39 aa).

3 disulfide bridges follow: Cys3–Cys19, Cys10–Cys34, and Cys15–Cys26.

Homodimer.

It localises to the secreted. In terms of biological role, mating ciliate pheromones (or gamones) are diffusible extracellular communication signals that distinguish different intraspecific classes of cells commonly referred to as 'mating types'. They prepare the latter for conjugation by changing their cell surface properties. This chain is Mating pheromone Er-11 (MAT11), found in Euplotes raikovi.